The chain runs to 416 residues: MAPAEDFDPKPRRASVAVDVGGVIVGGGAPVVVQSMTNTDTADIDGTVAQVAALHKAGSEIVRITVDRDESAAAVPKIRDRLERLGLDVPLIGDFHYIGHKLLADHPACAEALAKYRINPGNVGFKDKKDKQFADIIEMAIRYDKPVRIGVNWGSLDQELLTQLMDENQAKGFPLSARQVTREAICQSALLSAELAEEIGLSRNRIILSAKVSQVQDLIAVYSMLASRSDHALHLGLTEAGMGSKGIVASSAAMGYVLQQGIGDTIRVSLTPEPNGDRTREVQVAQELLQVMGFRQFIPVVAACPGCGRTTSTVFQELAQKIQSDIRKNMPVWREKYPGVEGLNVAVMGCIVNGPGESKHADIGISLPGTGENPAAPVFIDGEKALTLRGPKIAEDFEALVIDYIEKRYGQRSAAE.

Cys304, Cys307, Cys350, and Glu357 together coordinate [4Fe-4S] cluster.

This sequence belongs to the IspG family. Requires [4Fe-4S] cluster as cofactor.

The catalysed reaction is (2E)-4-hydroxy-3-methylbut-2-enyl diphosphate + oxidized [flavodoxin] + H2O + 2 H(+) = 2-C-methyl-D-erythritol 2,4-cyclic diphosphate + reduced [flavodoxin]. It functions in the pathway isoprenoid biosynthesis; isopentenyl diphosphate biosynthesis via DXP pathway; isopentenyl diphosphate from 1-deoxy-D-xylulose 5-phosphate: step 5/6. Functionally, converts 2C-methyl-D-erythritol 2,4-cyclodiphosphate (ME-2,4cPP) into 1-hydroxy-2-methyl-2-(E)-butenyl 4-diphosphate. In Allorhizobium ampelinum (strain ATCC BAA-846 / DSM 112012 / S4) (Agrobacterium vitis (strain S4)), this protein is 4-hydroxy-3-methylbut-2-en-1-yl diphosphate synthase (flavodoxin).